The following is a 344-amino-acid chain: Uroporphyrinogen decarboxylase (344 aa).

Residues 23–27 (RQAGR), Asp73, Tyr149, Thr204, and His321 each bind substrate.

This sequence belongs to the uroporphyrinogen decarboxylase family. Homodimer.

The protein resides in the cytoplasm. The catalysed reaction is uroporphyrinogen III + 4 H(+) = coproporphyrinogen III + 4 CO2. It participates in porphyrin-containing compound metabolism; protoporphyrin-IX biosynthesis; coproporphyrinogen-III from 5-aminolevulinate: step 4/4. In terms of biological role, catalyzes the decarboxylation of four acetate groups of uroporphyrinogen-III to yield coproporphyrinogen-III. The protein is Uroporphyrinogen decarboxylase of Francisella tularensis subsp. holarctica (strain LVS).